A 380-amino-acid chain; its full sequence is Acetylornithine deacetylase (380 aa).

His-79 lines the Zn(2+) pocket. Asp-81 is a catalytic residue. Asp-109 serves as a coordination point for Zn(2+). Residue Glu-139 is part of the active site. Glu-140, Glu-164, and His-351 together coordinate Zn(2+).

Belongs to the peptidase M20A family. ArgE subfamily. Homodimer. It depends on Zn(2+) as a cofactor. Requires Co(2+) as cofactor. Glutathione serves as cofactor.

It is found in the cytoplasm. It catalyses the reaction N(2)-acetyl-L-ornithine + H2O = L-ornithine + acetate. It functions in the pathway amino-acid biosynthesis; L-arginine biosynthesis; L-ornithine from N(2)-acetyl-L-ornithine (linear): step 1/1. In terms of biological role, catalyzes the hydrolysis of the amide bond of N(2)-acetylated L-amino acids. Cleaves the acetyl group from N-acetyl-L-ornithine to form L-ornithine, an intermediate in L-arginine biosynthesis pathway, and a branchpoint in the synthesis of polyamines. This chain is Acetylornithine deacetylase, found in Myxococcus xanthus.